The following is a 422-amino-acid chain: Proline-rich protein 22 (422 aa).

3 disordered regions span residues 1–35 (MQHP…PAPT), 306–325 (LCEV…SADD), and 363–422 (EEQP…ATPH). Over residues 383-400 (GKRKASTAKKGKPGRKAR) the composition is skewed to basic residues. The segment covering 413–422 (PREDLGATPH) has biased composition (basic and acidic residues).

This chain is Proline-rich protein 22 (PRR22), found in Homo sapiens (Human).